Here is a 283-residue protein sequence, read N- to C-terminus: MKVLRVRTYIPGFDEILYGGIPERNIVLISGGPGTGKSILGKQFLYNGLVKKDEPGIFVALEEHPVSVIRSFKHFGWDITKYEKEGKFAIVDAFTAGIGSTAQKEKYVVKDVDNVGELSGVLRDAIRNLNAKRVVIDSVSTLYLSKPAMARSIVMQLKRVIAGLGCTAMFISQVSAGERGFGGPGVEHAVDGIVRLDLDEYEGQLYRSVIVWKMRDSKISMVRHPMDITDEGIVIQWDKYLRITNVKAEIQPLPQKEIEEMKKAVEESEEEKESIQEAEIEEE.

Residues 4-249 form the KaiC domain; that stretch reads LRVRTYIPGF…YLRITNVKAE (246 aa). 31 to 38 provides a ligand contact to ATP; sequence GGPGTGKS. The disordered stretch occupies residues 261 to 283; sequence MKKAVEESEEEKESIQEAEIEEE. A compositionally biased stretch (acidic residues) spans 267–283; sequence ESEEEKESIQEAEIEEE.

This sequence belongs to the UPF0273 family.

This is UPF0273 protein STK_18300 from Sulfurisphaera tokodaii (strain DSM 16993 / JCM 10545 / NBRC 100140 / 7) (Sulfolobus tokodaii).